A 161-amino-acid polypeptide reads, in one-letter code: Cytochrome c-type biogenesis protein CcmE (161 aa).

The Cytoplasmic portion of the chain corresponds to 1–8; the sequence is MNPRRKKR. Residues 9 to 29 traverse the membrane as a helical; Signal-anchor for type II membrane protein segment; sequence LTLAIALIGGVAAIASLLLYA. Residues 30-161 lie on the Periplasmic side of the membrane; sequence LNSNLNLFYT…DYSQQKSAAQ (132 aa). Residues H131 and Y135 each contribute to the heme site. Positions 138 to 161 are disordered; sequence PEVAEAMGQKHEKLDYSQQKSAAQ.

Belongs to the CcmE/CycJ family.

The protein localises to the cell inner membrane. Functionally, heme chaperone required for the biogenesis of c-type cytochromes. Transiently binds heme delivered by CcmC and transfers the heme to apo-cytochromes in a process facilitated by CcmF and CcmH. The polypeptide is Cytochrome c-type biogenesis protein CcmE (Shewanella sp. (strain MR-4)).